The chain runs to 352 residues: Fe(3+) ions import ATP-binding protein FbpC (352 aa).

The 235-residue stretch at 5–239 folds into the ABC transporter domain; that stretch reads LHIGHLSKSF…PADLDAVLFI (235 aa). 37 to 44 contributes to the ATP binding site; sequence GASGCGKT.

Belongs to the ABC transporter superfamily. Fe(3+) ion importer (TC 3.A.1.10) family. As to quaternary structure, the complex is composed of two ATP-binding proteins (FbpC), two transmembrane proteins (FbpB) and a solute-binding protein (FbpA).

It localises to the cell inner membrane. The enzyme catalyses Fe(3+)(out) + ATP + H2O = Fe(3+)(in) + ADP + phosphate + H(+). Its function is as follows. Part of the ABC transporter complex FbpABC involved in Fe(3+) ions import. Responsible for energy coupling to the transport system. The sequence is that of Fe(3+) ions import ATP-binding protein FbpC from Neisseria gonorrhoeae.